We begin with the raw amino-acid sequence, 94 residues long: uncharacterized protein (94 aa).

This is an uncharacterized protein from Escherichia coli (strain K12).